Consider the following 87-residue polypeptide: NAD(P)H-quinone oxidoreductase subunit O (87 aa).

Positions 1–10 (MSEQTGKVDD) are enriched in basic and acidic residues. The disordered stretch occupies residues 1–26 (MSEQTGKVDDSQSPPKVQKKLRKGDL).

Belongs to the complex I NdhO subunit family. NDH-1 can be composed of about 15 different subunits; different subcomplexes with different compositions have been identified which probably have different functions.

The protein resides in the cellular thylakoid membrane. The catalysed reaction is a plastoquinone + NADH + (n+1) H(+)(in) = a plastoquinol + NAD(+) + n H(+)(out). It catalyses the reaction a plastoquinone + NADPH + (n+1) H(+)(in) = a plastoquinol + NADP(+) + n H(+)(out). Functionally, NDH-1 shuttles electrons from an unknown electron donor, via FMN and iron-sulfur (Fe-S) centers, to quinones in the respiratory and/or the photosynthetic chain. The immediate electron acceptor for the enzyme in this species is believed to be plastoquinone. Couples the redox reaction to proton translocation, and thus conserves the redox energy in a proton gradient. Cyanobacterial NDH-1 also plays a role in inorganic carbon-concentration. The sequence is that of NAD(P)H-quinone oxidoreductase subunit O from Prochlorococcus marinus (strain NATL1A).